The following is a 260-amino-acid chain: Thaumatin-like protein 1 (260 aa).

A signal peptide spans 1–32 (MIITVLHSHVSFYFIILSFLFFHALHLVGSDG). 8 disulfide bridges follow: cysteine 41–cysteine 255, cysteine 89–cysteine 100, cysteine 105–cysteine 112, cysteine 166–cysteine 245, cysteine 171–cysteine 228, cysteine 179–cysteine 191, cysteine 195–cysteine 204, and cysteine 205–cysteine 215.

Belongs to the thaumatin family. As to expression, expressed only in roots.

Functionally, involved in local responses of roots to colonization by non-pathogenic plant growth-promoting rhizobacteria (PGPR) fluorescent Pseudomonas spp., but seems to not being required for the establishment of subsequent induced systemic resistance (ISR). This is Thaumatin-like protein 1 from Arabidopsis thaliana (Mouse-ear cress).